Here is a 240-residue protein sequence, read N- to C-terminus: Arginine transport ATP-binding protein ArtM (240 aa).

Residues 2-236 (IKVEKLSKSF…PKSKRAQDFL (235 aa)) form the ABC transporter domain. 34 to 41 (GPSGSGKS) is a binding site for ATP.

It belongs to the ABC transporter superfamily.

Its subcellular location is the cell membrane. Functionally, part of a binding-protein-dependent transport system for arginine. Probably responsible for energy coupling to the transport system. The sequence is that of Arginine transport ATP-binding protein ArtM (artM) from Bacillus subtilis (strain 168).